The sequence spans 727 residues: ADP-ribosylation factor-binding protein GGA3 (727 aa).

One can recognise a VHS domain in the interval 16 to 146 (ATNPSNRQED…MLKRQGIVQS (131 aa)). Ser-159 and Ser-275 each carry phosphoserine. The region spanning 171 to 298 (DEEKSKLLAK…VINSYKTIIE (128 aa)) is the GAT domain. The unstructured hinge stretch occupies residues 299–597 (GQIINGEVTT…VHVPLESIKP (299 aa)). The interval 334-385 (TPSSSSPVLAPAPAPPTSGIPILPPPPQTSGPPRSRSSSQAEAPSGPDSTNN) is disordered. The span at 343–363 (APAPAPPTSGIPILPPPPQTS) shows a compositional bias: pro residues. The span at 364–374 (GPPRSRSSSQA) shows a compositional bias: low complexity. A DXXLL motif is present at residues 391 to 395 (DEELL). The disordered stretch occupies residues 400 to 419 (SDPAPTAPKESAGNSPWHLF). Positions 598–719 (SSALPVTAYD…TELGEVDQFP (122 aa)) constitute a GAE domain.

This sequence belongs to the GGA protein family. In terms of assembly, monomer. Interacts with GGA1 and GGA2. Binds to clathrin and activated ARFs, such as ARF1, ARF5 and ARF6. Binds RABEP1 and RABGEF1. Interacts with the membrane proteins M6PR/CD-MPR and IGF2R/CI-MPR and the accessory proteins SYNRG, EPN4, NECAP1, NECAP2 and AFTPH/aftiphilin. Interacts with TSG101 and UBC. Interacts with ADRA2B. Interacts with NTRK1; the interaction is independent of NTRK1 activation and ubiquitination. Interacts (via VHS domain) with BACE1 (via DXXLL motif). Post-translationally, phosphorylated by CK2 and dephosphorylated by PP2A. Phosphorylation of GGA3 allows the internal DXXLL motif to bind the VHS domain and to inhibit the recognition of cargo signals. In terms of processing, ubiquitinated. Proteolytically cleaved during apoptosis by CASP3.

It is found in the golgi apparatus. It localises to the trans-Golgi network membrane. The protein resides in the endosome membrane. The protein localises to the early endosome membrane. Its subcellular location is the recycling endosome membrane. Its function is as follows. Plays a role in protein sorting and trafficking between the trans-Golgi network (TGN) and endosomes. Mediates the ARF-dependent recruitment of clathrin to the TGN and binds ubiquitinated proteins and membrane cargo molecules with a cytosolic acidic cluster-dileucine (DXXLL) motif. Mediates export of the GPCR receptor ADRA2B to the cell surface. Involved in BACE1 transport and sorting as well as regulation of BACE1 protein levels. Regulates retrograde transport of BACE1 from endosomes to the trans-Golgi network via interaction through the VHS motif and dependent of BACE1 phosphorylation. Modulates BACE1 protein levels independently of the interaction between VHS domain and DXXLL motif through recognition of ubiquitination. Key player in a novel DXXLL-mediated endosomal sorting machinery to the recycling pathway that targets NTRK1 to the plasma membrane. The chain is ADP-ribosylation factor-binding protein GGA3 from Rattus norvegicus (Rat).